The following is an 86-amino-acid chain: MKNLIAELLVKLAEKEEESKELVAQVEALEIVVTALLRHLDPNTQQTLIASVEGALEGVQPESNVPQRDTELLQQYVKKLLRHPRT.

The stretch at 1 to 36 (MKNLIAELLVKLAEKEEESKELVAQVEALEIVVTAL) forms a coiled coil.

This sequence belongs to the IraP family. As to quaternary structure, interacts with RssB.

It is found in the cytoplasm. Inhibits RpoS proteolysis by regulating RssB activity, thereby increasing the stability of the sigma stress factor RpoS especially during phosphate starvation, but also in stationary phase and during nitrogen starvation. Its effect on RpoS stability is due to its interaction with RssB, which probably blocks the interaction of RssB with RpoS, and the consequent delivery of the RssB-RpoS complex to the ClpXP protein degradation pathway. The protein is Anti-adapter protein IraP of Cronobacter sakazakii (strain ATCC BAA-894) (Enterobacter sakazakii).